Reading from the N-terminus, the 596-residue chain is Elongation factor 4 (596 aa).

Residues 2-184 form the tr-type G domain; it reads KHIRNFSIIA…VIVEQIPPPE (183 aa). GTP contacts are provided by residues 14–19 and 131–134; these read DHGKST and NKID.

The protein belongs to the TRAFAC class translation factor GTPase superfamily. Classic translation factor GTPase family. LepA subfamily.

Its subcellular location is the cell inner membrane. The enzyme catalyses GTP + H2O = GDP + phosphate + H(+). Required for accurate and efficient protein synthesis under certain stress conditions. May act as a fidelity factor of the translation reaction, by catalyzing a one-codon backward translocation of tRNAs on improperly translocated ribosomes. Back-translocation proceeds from a post-translocation (POST) complex to a pre-translocation (PRE) complex, thus giving elongation factor G a second chance to translocate the tRNAs correctly. Binds to ribosomes in a GTP-dependent manner. The polypeptide is Elongation factor 4 (Shewanella oneidensis (strain ATCC 700550 / JCM 31522 / CIP 106686 / LMG 19005 / NCIMB 14063 / MR-1)).